A 640-amino-acid chain; its full sequence is Threonine--tRNA ligase (640 aa).

Residues 1-61 form the TGS domain; that stretch reads MPIITLPNGD…TEDSTLQIIT (61 aa). The interval 242-533 is catalytic; it reads DHRKIGKALD…LIEHYAGFMP (292 aa). Positions 333, 384, and 510 each coordinate Zn(2+).

Belongs to the class-II aminoacyl-tRNA synthetase family. Homodimer. The cofactor is Zn(2+).

The protein resides in the cytoplasm. It catalyses the reaction tRNA(Thr) + L-threonine + ATP = L-threonyl-tRNA(Thr) + AMP + diphosphate + H(+). Functionally, catalyzes the attachment of threonine to tRNA(Thr) in a two-step reaction: L-threonine is first activated by ATP to form Thr-AMP and then transferred to the acceptor end of tRNA(Thr). Also edits incorrectly charged L-seryl-tRNA(Thr). The protein is Threonine--tRNA ligase of Acinetobacter baumannii (strain AB307-0294).